Here is a 457-residue protein sequence, read N- to C-terminus: MALWGGRFTQAADQRFKQFNDSLRFDYRLAEQDIVGSVAWSKALVTVGVLTADEQLQLEEALSALLEEVRVNPQQILESDAEDIHSWVEGKLIDKVGQLGKKLHTGRSRNDQVATDLKLWCKDTVTELLSANRQLQSALVETAQNNQDAVMPGYTHLQRAQPVTFAHWCLAYVEMLARDESRLQDALKRLDVSPLGCGALAGTAYEIDREQLAGWLGFASATRNSLDSVSDRDHVLELLSDASIGMVHLSRFAEDLIFFNTGEAGFVELSDRVTSGSSLMPQKKNPDALELIRGKCGRVQGALTAMMMTLKGLPLAYNKDMQEDKEGLFDALDTWLDCLHMAALVLDGIQVKRPRCQEAAQQGYANATELADYLVAKGVPFREAHHIVGETVVEAIRQGKPLEDLSLADLQKFSAVIGDDVYPILSLQSCLDKRAAKGGVSPQQVAQAIDYAKARLA.

It belongs to the lyase 1 family. Argininosuccinate lyase subfamily.

The protein resides in the cytoplasm. The catalysed reaction is 2-(N(omega)-L-arginino)succinate = fumarate + L-arginine. It participates in amino-acid biosynthesis; L-arginine biosynthesis; L-arginine from L-ornithine and carbamoyl phosphate: step 3/3. The polypeptide is Argininosuccinate lyase (Citrobacter koseri (strain ATCC BAA-895 / CDC 4225-83 / SGSC4696)).